Here is a 228-residue protein sequence, read N- to C-terminus: NAD(P)H-hydrate epimerase (228 aa).

A YjeF N-terminal domain is found at 9–209 (VRAVERLAHR…LLGLTPAFLA (201 aa)). 53 to 57 (NNGGD) serves as a coordination point for (6S)-NADPHX. 2 residues coordinate K(+): asparagine 54 and aspartate 115. (6S)-NADPHX contacts are provided by residues 119-125 (GIGLARP) and aspartate 148. A K(+)-binding site is contributed by serine 151.

This sequence belongs to the NnrE/AIBP family. K(+) serves as cofactor.

The enzyme catalyses (6R)-NADHX = (6S)-NADHX. It carries out the reaction (6R)-NADPHX = (6S)-NADPHX. Its function is as follows. Catalyzes the epimerization of the S- and R-forms of NAD(P)HX, a damaged form of NAD(P)H that is a result of enzymatic or heat-dependent hydration. This is a prerequisite for the S-specific NAD(P)H-hydrate dehydratase to allow the repair of both epimers of NAD(P)HX. The sequence is that of NAD(P)H-hydrate epimerase from Bordetella pertussis (strain CS).